A 332-amino-acid polypeptide reads, in one-letter code: Cyclin-D1-binding protein 1 (332 aa).

At Ala-2 the chain carries N-acetylalanine. 2 interaction with TCF3 regions span residues 2–184 (ASAT…VDFV) and 150–332 (ISYN…CLLD). 2 interaction with RPLP0 regions span residues 2 to 190 (ASAT…AHEE) and 240 to 332 (LIIP…CLLD). The tract at residues 2–208 (ASATAPAAAA…DPYSGLLNDT (207 aa)) is required for interaction with CCND1.

This sequence belongs to the CCNDBP1 family. As to quaternary structure, interacts with CCND1 and GRAP2. May also interact with COPS5, RPLP0, SIRT6, SYF2 and TCF3. Post-translationally, phosphorylated.

The protein resides in the cytoplasm. Its subcellular location is the nucleus. Functionally, may negatively regulate cell cycle progression. May act at least in part via inhibition of the cyclin-D1/CDK4 complex, thereby preventing phosphorylation of RB1 and blocking E2F-dependent transcription. The chain is Cyclin-D1-binding protein 1 (CCNDBP1) from Macaca fascicularis (Crab-eating macaque).